A 376-amino-acid polypeptide reads, in one-letter code: Chaperone protein DnaJ (376 aa).

Residues Asp5–Gly70 form the J domain. The CR-type zinc finger occupies Gly134 to Thr212. Residues Cys147, Cys150, Cys164, Cys167, Cys186, Cys189, Cys200, and Cys203 each coordinate Zn(2+). CXXCXGXG motif repeat units follow at residues Cys147–Gly154, Cys164–Gly171, Cys186–Gly193, and Cys200–Gly207.

The protein belongs to the DnaJ family. Homodimer. Zn(2+) is required as a cofactor.

Its subcellular location is the cytoplasm. Its function is as follows. Participates actively in the response to hyperosmotic and heat shock by preventing the aggregation of stress-denatured proteins and by disaggregating proteins, also in an autonomous, DnaK-independent fashion. Unfolded proteins bind initially to DnaJ; upon interaction with the DnaJ-bound protein, DnaK hydrolyzes its bound ATP, resulting in the formation of a stable complex. GrpE releases ADP from DnaK; ATP binding to DnaK triggers the release of the substrate protein, thus completing the reaction cycle. Several rounds of ATP-dependent interactions between DnaJ, DnaK and GrpE are required for fully efficient folding. Also involved, together with DnaK and GrpE, in the DNA replication of plasmids through activation of initiation proteins. The chain is Chaperone protein DnaJ from Alcanivorax borkumensis (strain ATCC 700651 / DSM 11573 / NCIMB 13689 / SK2).